The chain runs to 246 residues: Alpha-tubulin N-acetyltransferase (246 aa).

Residues 21 to 202 form the N-acetyltransferase domain; that stretch reads LTLVPDGVSR…NNFVVFHSFF (182 aa). Residues 135–148 and 172–181 contribute to the acetyl-CoA site; these read FYVD…GYGK and SNKLLGFLRK.

This sequence belongs to the acetyltransferase ATAT1 family.

It carries out the reaction L-lysyl-[alpha-tubulin] + acetyl-CoA = N(6)-acetyl-L-lysyl-[alpha-tubulin] + CoA + H(+). Its function is as follows. Specifically acetylates 'Lys-40' in alpha-tubulin on the lumenal side of microtubules. Promotes microtubule destabilization and accelerates microtubule dynamics; this activity may be independent of acetylation activity. Acetylates alpha-tubulin with a slow enzymatic rate, due to a catalytic site that is not optimized for acetyl transfer. Enters the microtubule through each end and diffuses quickly throughout the lumen of microtubules. Acetylates only long/old microtubules because of its slow acetylation rate since it does not have time to act on dynamically unstable microtubules before the enzyme is released. This chain is Alpha-tubulin N-acetyltransferase, found in Leishmania infantum.